Reading from the N-terminus, the 335-residue chain is Methionine import ATP-binding protein MetN (335 aa).

An ABC transporter domain is found at 2–241 (IQFKDSYKHY…PQHPTTRSFV (240 aa)). Residue 38-45 (GHSGAGKS) coordinates ATP.

It belongs to the ABC transporter superfamily. Methionine importer (TC 3.A.1.24) family. In terms of assembly, the complex is composed of two ATP-binding proteins (MetN), two transmembrane proteins (MetI) and a solute-binding protein (MetQ).

The protein localises to the cell inner membrane. The catalysed reaction is L-methionine(out) + ATP + H2O = L-methionine(in) + ADP + phosphate + H(+). It carries out the reaction D-methionine(out) + ATP + H2O = D-methionine(in) + ADP + phosphate + H(+). Part of the ABC transporter complex MetNIQ involved in methionine import. Responsible for energy coupling to the transport system. The chain is Methionine import ATP-binding protein MetN from Xylella fastidiosa (strain Temecula1 / ATCC 700964).